The sequence spans 539 residues: Chaperonin GroEL 1 (539 aa).

Residues 29-32, 86-90, Gly413, and Asp495 contribute to the ATP site; these read TLGP and DGTTT.

This sequence belongs to the chaperonin (HSP60) family. As to quaternary structure, forms a cylinder of 14 subunits composed of two heptameric rings stacked back-to-back. Interacts with the co-chaperonin GroES.

It localises to the cytoplasm. It catalyses the reaction ATP + H2O + a folded polypeptide = ADP + phosphate + an unfolded polypeptide.. Together with its co-chaperonin GroES, plays an essential role in assisting protein folding. The GroEL-GroES system forms a nano-cage that allows encapsulation of the non-native substrate proteins and provides a physical environment optimized to promote and accelerate protein folding. This Mycobacterium bovis (strain ATCC BAA-935 / AF2122/97) protein is Chaperonin GroEL 1.